The following is a 250-amino-acid chain: Methionine aminopeptidase (250 aa).

His77 lines the substrate pocket. Asp94, Asp105, and His169 together coordinate a divalent metal cation. His176 lines the substrate pocket. The a divalent metal cation site is built by Glu202 and Glu235.

It belongs to the peptidase M24A family. Methionine aminopeptidase type 1 subfamily. In terms of assembly, monomer. It depends on Co(2+) as a cofactor. Zn(2+) is required as a cofactor. The cofactor is Mn(2+). Requires Fe(2+) as cofactor.

The enzyme catalyses Release of N-terminal amino acids, preferentially methionine, from peptides and arylamides.. Its function is as follows. Removes the N-terminal methionine from nascent proteins. The N-terminal methionine is often cleaved when the second residue in the primary sequence is small and uncharged (Met-Ala-, Cys, Gly, Pro, Ser, Thr, or Val). Requires deformylation of the N(alpha)-formylated initiator methionine before it can be hydrolyzed. This is Methionine aminopeptidase from Mycoplasmoides gallisepticum (strain R(low / passage 15 / clone 2)) (Mycoplasma gallisepticum).